The primary structure comprises 658 residues: Threonine--tRNA ligase (658 aa).

The TGS domain occupies 1–64; the sequence is MSFSISLSFP…EQSGQVEIIT (64 aa). The segment at 246 to 549 is catalytic; it reads DHRRLGREMD…LIENFAGHMP (304 aa). Zn(2+) contacts are provided by cysteine 343, histidine 394, and histidine 526.

Belongs to the class-II aminoacyl-tRNA synthetase family. As to quaternary structure, homodimer. Zn(2+) serves as cofactor.

It is found in the cytoplasm. It carries out the reaction tRNA(Thr) + L-threonine + ATP = L-threonyl-tRNA(Thr) + AMP + diphosphate + H(+). In terms of biological role, catalyzes the attachment of threonine to tRNA(Thr) in a two-step reaction: L-threonine is first activated by ATP to form Thr-AMP and then transferred to the acceptor end of tRNA(Thr). Also edits incorrectly charged L-seryl-tRNA(Thr). This chain is Threonine--tRNA ligase, found in Bartonella bacilliformis (strain ATCC 35685 / KC583 / Herrer 020/F12,63).